The sequence spans 1382 residues: DNA-directed RNA polymerase subunit beta'' (1382 aa).

Zn(2+) is bound by residues Cys224, Cys294, Cys301, and Cys304.

The protein belongs to the RNA polymerase beta' chain family. RpoC2 subfamily. In plastids the minimal PEP RNA polymerase catalytic core is composed of four subunits: alpha, beta, beta', and beta''. When a (nuclear-encoded) sigma factor is associated with the core the holoenzyme is formed, which can initiate transcription. The cofactor is Zn(2+).

It localises to the plastid. The protein localises to the chloroplast. The catalysed reaction is RNA(n) + a ribonucleoside 5'-triphosphate = RNA(n+1) + diphosphate. DNA-dependent RNA polymerase catalyzes the transcription of DNA into RNA using the four ribonucleoside triphosphates as substrates. In Liriodendron tulipifera (Tuliptree), this protein is DNA-directed RNA polymerase subunit beta''.